The chain runs to 111 residues: ATP-dependent Clp protease adapter protein ClpS (111 aa).

It belongs to the ClpS family. In terms of assembly, binds to the N-terminal domain of the chaperone ClpA.

Its function is as follows. Involved in the modulation of the specificity of the ClpAP-mediated ATP-dependent protein degradation. In Legionella pneumophila (strain Paris), this protein is ATP-dependent Clp protease adapter protein ClpS.